We begin with the raw amino-acid sequence, 716 residues long: Translation initiation factor IF-2 (716 aa).

A disordered region spans residues 52–135 (QQESNNNTKQ…PAAEPKEMPS (84 aa)). Over residues 56–125 (NNNTKQNTQN…KNNKGNKNNK (70 aa)) the composition is skewed to low complexity. The 170-residue stretch at 218–387 (ERPAVVTIMG…GLVAEVQELK (170 aa)) folds into the tr-type G domain. The G1 stretch occupies residues 227–234 (GHVDHGKT). 227–234 (GHVDHGKT) is a binding site for GTP. The segment at 252-256 (GITQH) is G2. The interval 273–276 (DTPG) is G3. GTP-binding positions include 273–277 (DTPGH) and 327–330 (NKID). A G4 region spans residues 327-330 (NKID). Residues 363 to 365 (SAL) are G5.

Belongs to the TRAFAC class translation factor GTPase superfamily. Classic translation factor GTPase family. IF-2 subfamily.

It localises to the cytoplasm. One of the essential components for the initiation of protein synthesis. Protects formylmethionyl-tRNA from spontaneous hydrolysis and promotes its binding to the 30S ribosomal subunits. Also involved in the hydrolysis of GTP during the formation of the 70S ribosomal complex. In Staphylococcus haemolyticus (strain JCSC1435), this protein is Translation initiation factor IF-2.